Reading from the N-terminus, the 434-residue chain is Bestrophin homolog 12 (434 aa).

A run of 4 helical transmembrane segments spans residues 31–51 (KVIL…FLVF), 76–96 (VCIP…DQWE), 244–264 (IPIP…YFFF), and 278–298 (WALS…FLVG).

The protein belongs to the anion channel-forming bestrophin (TC 1.A.46) family. Calcium-sensitive chloride channel subfamily. Forms oligomers.

Its subcellular location is the cell membrane. In terms of biological role, forms chloride channels. This Caenorhabditis elegans protein is Bestrophin homolog 12 (best-12).